A 264-amino-acid chain; its full sequence is Large ribosomal subunit protein uL2 (264 aa).

Belongs to the universal ribosomal protein uL2 family.

It is found in the cytoplasm. In Tetrahymena thermophila (strain SB210), this protein is Large ribosomal subunit protein uL2 (RPL8).